We begin with the raw amino-acid sequence, 241 residues long: VKSTNLMAFVATKMLERQEDLDTCTEMQVEKMKASTKARLRTESSFAPRTWEDAIKDGELLFNGTILQAESPTMTLASVEMKGKKSPIDFAPSNIAPIGQNPIYLSPCIPNFDGNVWEATMYHHRGATLTKTMNCNCFQRTIWCHPNPSRMRLSYAFVLYCRNTKKICGYLIARQVAGIETGIRKCFRCIKSGFVMATDEISLTILRSIKSGAQLDPYWGNETPDIDKTEAYMLSLREAGP.

The protein resides in the host cytoplasm. It localises to the host nucleus. Suppresses the RNA silencing-based antiviral response in Drosophila cells. The chain is Non-structural protein 1 (NS) from Homo sapiens (Human).